Consider the following 186-residue polypeptide: Large ribosomal subunit protein uL22 (186 aa).

2 stretches are compositionally biased toward basic and acidic residues: residues 157-167 (VSKATDDEPTK) and 177-186 (RQKEKMLRSE). A disordered region spans residues 157–186 (VSKATDDEPTKKKLSKKKLQRQKEKMLRSE).

This sequence belongs to the universal ribosomal protein uL22 family.

This Drosophila yakuba (Fruit fly) protein is Large ribosomal subunit protein uL22 (RpL17).